Consider the following 573-residue polypeptide: Pentatricopeptide repeat-containing protein At3g62890 (573 aa).

10 PPR repeats span residues Glu-23 to Pro-60, Asp-61 to Lys-95, Asp-96 to Lys-126, Asp-127 to Ser-161, Trp-162 to Pro-188, Asn-198 to Ile-232, Asp-233 to Lys-263, Asp-265 to Ser-295, Asn-301 to Pro-336, and Ser-337 to Glu-367. A type E motif; degenerate region spans residues Ile-372–Glu-447. Positions Gly-448 to Arg-478 are type E(+) motif. The type DYW motif stretch occupies residues Glu-479 to Trp-573.

The protein belongs to the PPR family. PCMP-H subfamily.

This chain is Pentatricopeptide repeat-containing protein At3g62890 (PCMP-H82), found in Arabidopsis thaliana (Mouse-ear cress).